The sequence spans 513 residues: ATP synthase subunit alpha (513 aa).

Gly169–Thr176 serves as a coordination point for ATP.

Belongs to the ATPase alpha/beta chains family. In terms of assembly, F-type ATPases have 2 components, CF(1) - the catalytic core - and CF(0) - the membrane proton channel. CF(1) has five subunits: alpha(3), beta(3), gamma(1), delta(1), epsilon(1). CF(0) has three main subunits: a(1), b(2) and c(9-12). The alpha and beta chains form an alternating ring which encloses part of the gamma chain. CF(1) is attached to CF(0) by a central stalk formed by the gamma and epsilon chains, while a peripheral stalk is formed by the delta and b chains.

It is found in the cell inner membrane. The enzyme catalyses ATP + H2O + 4 H(+)(in) = ADP + phosphate + 5 H(+)(out). Functionally, produces ATP from ADP in the presence of a proton gradient across the membrane. The alpha chain is a regulatory subunit. This Shewanella piezotolerans (strain WP3 / JCM 13877) protein is ATP synthase subunit alpha.